The sequence spans 231 residues: MSALCPLLTPPASEALLLAQARQLSGYTLGELAVMAGITTPKDLKRDKGWIGVLLEIWLGASAGSKPEQDFAALGVELKTIPVDSLGRPLETTFVCVAPLTGNSGVTWETSHVRHKLKRVLWVPVEGDRSIPLAERRVGSPLLWSPSEEEDRQLRLDWEELMDMIVLGQVERITARHGEVLQLRPKAANARALTEAIGARGEPILTLPRGFYLKKNFTQALLARHFLLQNP.

Belongs to the MutH family.

The protein localises to the cytoplasm. Sequence-specific endonuclease that cleaves unmethylated GATC sequences. It is involved in DNA mismatch repair. The polypeptide is DNA mismatch repair protein MutH (Salmonella typhi).